The following is a 404-amino-acid chain: 8-amino-7-oxononanoate synthase (404 aa).

A substrate-binding site is contributed by arginine 20. Glycine 116–tyrosine 117 contributes to the pyridoxal 5'-phosphate binding site. A substrate-binding site is contributed by histidine 141. Pyridoxal 5'-phosphate is bound by residues serine 187, histidine 215, and threonine 243. Lysine 246 is subject to N6-(pyridoxal phosphate)lysine. Position 366 (threonine 366) interacts with substrate.

Belongs to the class-II pyridoxal-phosphate-dependent aminotransferase family. BioF subfamily. In terms of assembly, homodimer. Requires pyridoxal 5'-phosphate as cofactor.

It catalyses the reaction 6-carboxyhexanoyl-[ACP] + L-alanine + H(+) = (8S)-8-amino-7-oxononanoate + holo-[ACP] + CO2. It participates in cofactor biosynthesis; biotin biosynthesis. In terms of biological role, catalyzes the decarboxylative condensation of pimeloyl-[acyl-carrier protein] and L-alanine to produce 8-amino-7-oxononanoate (AON), [acyl-carrier protein], and carbon dioxide. The polypeptide is 8-amino-7-oxononanoate synthase (Cupriavidus taiwanensis (strain DSM 17343 / BCRC 17206 / CCUG 44338 / CIP 107171 / LMG 19424 / R1) (Ralstonia taiwanensis (strain LMG 19424))).